Here is a 349-residue protein sequence, read N- to C-terminus: AA9 family lytic polysaccharide monooxygenase A (349 aa).

The first 19 residues, 1-19, serve as a signal peptide directing secretion; sequence MKSTFGLLALAAAAKLVSA. His20 and His102 together coordinate Cu(2+). Cysteines 62 and 183 form a disulfide. His169 is an O2 binding site. Tyr180 provides a ligand contact to Cu(2+). Residues 233 to 304 form a disordered region; it reads DGSSSGSSGS…SGSNSGSDSC (72 aa). Low complexity-rich tracts occupy residues 234–262 and 269–304; these read GSSS…AVPT and TSAT…SDSC. The region spanning 311–347 is the CBM1 domain; it reads GSVKIYGQCGGQNYSGPTSCEAGLICKEWNPYYHQCV. A glycan (N-linked (GlcNAc...) asparagine) is linked at Asn323.

It belongs to the polysaccharide monooxygenase AA9 family. Cu(2+) serves as cofactor.

The protein localises to the secreted. It carries out the reaction [(1-&gt;4)-beta-D-glucosyl]n+m + reduced acceptor + O2 = 4-dehydro-beta-D-glucosyl-[(1-&gt;4)-beta-D-glucosyl]n-1 + [(1-&gt;4)-beta-D-glucosyl]m + acceptor + H2O.. Its function is as follows. Lytic polysaccharide monooxygenase (LPMO) that depolymerizes crystalline and amorphous polysaccharides via the oxidation of scissile alpha- or beta-(1-4)-glycosidic bonds, yielding C4 oxidation products. Catalysis by LPMOs requires the reduction of the active-site copper from Cu(II) to Cu(I) by a reducing agent and H(2)O(2) or O(2) as a cosubstrate. The protein is AA9 family lytic polysaccharide monooxygenase A (eglD) of Aspergillus fumigatus (strain CBS 144.89 / FGSC A1163 / CEA10) (Neosartorya fumigata).